Here is an 807-residue protein sequence, read N- to C-terminus: Glycerol-3-phosphate acyltransferase (807 aa).

Residues 308 to 313 carry the HXXXXD motif motif; it reads CHRSHM.

The protein belongs to the GPAT/DAPAT family.

The protein localises to the cell inner membrane. It catalyses the reaction sn-glycerol 3-phosphate + an acyl-CoA = a 1-acyl-sn-glycero-3-phosphate + CoA. Its pathway is phospholipid metabolism; CDP-diacylglycerol biosynthesis; CDP-diacylglycerol from sn-glycerol 3-phosphate: step 1/3. The chain is Glycerol-3-phosphate acyltransferase from Shewanella baltica (strain OS195).